Here is a 601-residue protein sequence, read N- to C-terminus: Elongation factor 4 (601 aa).

Residues 5–187 (ENIRNFCIVA…AIITTFPPPK (183 aa)) enclose the tr-type G domain. GTP contacts are provided by residues 17–22 (DHGKST) and 134–137 (NKID).

The protein belongs to the TRAFAC class translation factor GTPase superfamily. Classic translation factor GTPase family. LepA subfamily.

It localises to the cell inner membrane. The catalysed reaction is GTP + H2O = GDP + phosphate + H(+). Required for accurate and efficient protein synthesis under certain stress conditions. May act as a fidelity factor of the translation reaction, by catalyzing a one-codon backward translocation of tRNAs on improperly translocated ribosomes. Back-translocation proceeds from a post-translocation (POST) complex to a pre-translocation (PRE) complex, thus giving elongation factor G a second chance to translocate the tRNAs correctly. Binds to ribosomes in a GTP-dependent manner. The chain is Elongation factor 4 from Treponema denticola (strain ATCC 35405 / DSM 14222 / CIP 103919 / JCM 8153 / KCTC 15104).